The primary structure comprises 533 residues: (E)-beta-farnesene synthase (533 aa).

Residues D286, D290, N430, S434, and E438 each coordinate Mg(2+). Positions 286 to 290 match the DDXXD motif motif; the sequence is DDMMD.

This sequence belongs to the terpene synthase family. It depends on Mg(2+) as a cofactor. The cofactor is Co(2+). Mn(2+) is required as a cofactor.

It localises to the cytoplasm. It carries out the reaction (2E,6E)-farnesyl diphosphate = (E)-beta-farnesene + diphosphate. Its pathway is secondary metabolite biosynthesis; terpenoid biosynthesis. Its function is as follows. Sesquiterpene cyclase catalyzing the production of sixfold more beta-farnesene than alpha-bergamotene from farnesyl diphosphate. Involved in indirect defense by producing volatile signals attracting natural enemies of herbivores. This chain is (E)-beta-farnesene synthase, found in Zea perennis (Perennial teosinte).